The chain runs to 99 residues: Large ribosomal subunit protein uL23 (99 aa).

It belongs to the universal ribosomal protein uL23 family. In terms of assembly, part of the 50S ribosomal subunit. Contacts protein L29, and trigger factor when it is bound to the ribosome.

Its function is as follows. One of the early assembly proteins it binds 23S rRNA. One of the proteins that surrounds the polypeptide exit tunnel on the outside of the ribosome. Forms the main docking site for trigger factor binding to the ribosome. The chain is Large ribosomal subunit protein uL23 from Xanthomonas campestris pv. campestris (strain B100).